Consider the following 307-residue polypeptide: 4-hydroxythreonine-4-phosphate dehydrogenase (307 aa).

Histidine 126 and threonine 127 together coordinate substrate. A divalent metal cation is bound by residues histidine 156, histidine 195, and histidine 251. Substrate is bound by residues lysine 259, asparagine 268, and arginine 277.

Belongs to the PdxA family. In terms of assembly, homodimer. The cofactor is Zn(2+). Requires Mg(2+) as cofactor. It depends on Co(2+) as a cofactor.

Its subcellular location is the cytoplasm. It carries out the reaction 4-(phosphooxy)-L-threonine + NAD(+) = 3-amino-2-oxopropyl phosphate + CO2 + NADH. The protein operates within cofactor biosynthesis; pyridoxine 5'-phosphate biosynthesis; pyridoxine 5'-phosphate from D-erythrose 4-phosphate: step 4/5. Catalyzes the NAD(P)-dependent oxidation of 4-(phosphooxy)-L-threonine (HTP) into 2-amino-3-oxo-4-(phosphooxy)butyric acid which spontaneously decarboxylates to form 3-amino-2-oxopropyl phosphate (AHAP). This is 4-hydroxythreonine-4-phosphate dehydrogenase from Helicobacter pylori (strain ATCC 700392 / 26695) (Campylobacter pylori).